Reading from the N-terminus, the 776-residue chain is Microtubule-associated protein tau (776 aa).

The segment covering 1 to 26 (MAEPRQEFEVMEDHAGTYGLGDRKDQ) has biased composition (basic and acidic residues). The tract at residues 1-591 (MAEPRQEFEV…PVPMPDLKNV (591 aa)) is disordered. Ala-2 carries the post-translational modification N-acetylalanine. Tyr-18 and Tyr-29 each carry phosphotyrosine. Lys-44 is covalently cross-linked (Glycyl lysine isopeptide (Lys-Gly) (interchain with G-Cter in ubiquitin)). Phosphoserine occurs at positions 46 and 61. A compositionally biased stretch (polar residues) spans 61–71 (SETSDAKSTPT). Residues Thr-69, Thr-71, and Thr-111 each carry the phosphothreonine modification. 2 stretches are compositionally biased toward basic and acidic residues: residues 179–189 (EGGRHAPELLK) and 207–216 (GGKERPGSKE). Ser-214 is subject to Phosphoserine. A compositionally biased stretch (acidic residues) spans 217–228 (EVDEDRDVDESS). Basic and acidic residues-rich tracts occupy residues 293-303 (KGQDAHLEFTF) and 314-323 (EQAHSEEHLG). The segment covering 324 to 340 (RAAFPGAPGEGPEARGP) has biased composition (low complexity). 2 stretches are compositionally biased toward basic and acidic residues: residues 344 to 356 (EDTK…EPSE) and 381 to 393 (KSKD…DKKA). Positions 440–452 (KYVSSVTPRTGSS) are enriched in polar residues. A compositionally biased stretch (basic and acidic residues) spans 455–466 (KEMKLKGADGKT). Thr-470 is modified (phosphothreonine). Arg-472 is subject to Omega-N-methylarginine. Lys-480 carries the post-translational modification N6,N6-dimethyllysine; alternate. An N6-acetyllysine; alternate modification is found at Lys-480. Residues Thr-486, Thr-492, and Thr-498 each carry the phosphothreonine modification. Phosphoserine occurs at positions 502, 526, and 530. The segment covering 517 to 528 (RSERGEPPKSGD) has biased composition (basic and acidic residues). Positions 529–549 (RSGYSSPGSPGTPGSRSRTPS) are enriched in low complexity. Tyr-532 is modified (phosphotyrosine). Phosphoserine is present on residues Ser-533, Ser-534, and Ser-537. Thr-540 and Thr-547 each carry phosphothreonine. Residue Ser-549 is modified to Phosphoserine. At Thr-552 the chain carries Phosphothreonine. Position 560 is an N6-acetyllysine (Lys-560). Phosphothreonine is present on Thr-566. Ser-570 and Ser-572 each carry phosphoserine. 4 Tau/MAP repeats span residues 579 to 609 (QTAP…GGGK), 610 to 640 (VQII…GGGS), 641 to 671 (VQIV…GGGQ), and 672 to 703 (VEVK…GGGN). A Glycyl lysine isopeptide (Lys-Gly) (interchain with G-Cter in ubiquitin) cross-link involves residue Lys-589. An N6-acetyllysine; alternate modification is found at Lys-594. Lys-594 bears the N6-methyllysine; alternate mark. Lys-594 participates in a covalent cross-link: Glycyl lysine isopeptide (Lys-Gly) (interchain with G-Cter in ubiquitin); alternate. Residue Ser-597 is modified to Phosphoserine. Lys-602 participates in a covalent cross-link: Glycyl lysine isopeptide (Lys-Gly) (interchain with G-Cter in ubiquitin). Lys-616 carries the N6-acetyllysine; alternate modification. Lys-616 is covalently cross-linked (Glycyl lysine isopeptide (Lys-Gly) (interchain with G-Cter in ubiquitin); alternate). Residues Ser-620 and Ser-624 each carry the phosphoserine modification. Lys-625 carries the post-translational modification N6-acetyllysine. Ser-628 is modified (phosphoserine). The residue at position 633 (Lys-633) is an N6-acetyllysine; alternate. Residue Lys-633 forms a Glycyl lysine isopeptide (Lys-Gly) (interchain with G-Cter in ubiquitin); alternate linkage. Position 640 is a phosphoserine (Ser-640). Lys-646 carries the post-translational modification N6,N6-dimethyllysine; alternate. 3 positions are modified to N6-acetyllysine; alternate: Lys-646, Lys-652, and Lys-656. Residues Lys-646, Lys-652, and Lys-656 each participate in a glycyl lysine isopeptide (Lys-Gly) (interchain with G-Cter in ubiquitin); alternate cross-link. Position 659 is a phosphoserine (Ser-659). Lys-666, Lys-678, and Lys-682 each carry N6-acetyllysine; alternate. Residues Lys-666, Lys-678, and Lys-682 each participate in a glycyl lysine isopeptide (Lys-Gly) (interchain with G-Cter in ubiquitin); alternate cross-link. Omega-N-methylarginine is present on Arg-684. Ser-687 carries the phosphoserine modification. Lys-688 participates in a covalent cross-link: Glycyl lysine isopeptide (Lys-Gly) (interchain with G-Cter in ubiquitin). Position 691 is a phosphoserine (Ser-691). The residue at position 704 (Lys-704) is an N6-acetyllysine; alternate. A Glycyl lysine isopeptide (Lys-Gly) (interchain with G-Cter in ubiquitin); alternate cross-link involves residue Lys-704. A Glycyl lysine isopeptide (Lys-Gly) (interchain with G-Cter in ubiquitin) cross-link involves residue Lys-710. The residue at position 720 (Lys-720) is an N6-acetyllysine; alternate. Lys-720 participates in a covalent cross-link: Glycyl lysine isopeptide (Lys-Gly) (interchain with G-Cter in ubiquitin); alternate. Phosphotyrosine is present on Tyr-729. Residues Ser-731 and Ser-735 each carry the phosphoserine modification. The interval 733 to 752 (VVSGDTSPRHLSNVSSTGSI) is disordered. A compositionally biased stretch (polar residues) spans 736 to 751 (GDTSPRHLSNVSSTGS). Thr-738 is modified (phosphothreonine). A phosphoserine mark is found at Ser-739, Ser-744, Ser-751, and Ser-757. Thr-762 is subject to Phosphothreonine.

Interacts with MARK1, MARK2, MARK3 and MARK4. Interacts with SQSTM1 when polyubiquitinated. Interacts with PSMC2 through SQSTM1. Interacts with FKBP4. Binds to CSNK1D. Interacts with SGK1. Interacts with EPM2A; the interaction dephosphorylates MAPT at Ser-396. Interacts with PIN1. Interacts with LRRK2. Interacts with LRP1, leading to endocytosis; this interaction is reduced in the presence of LRPAP1/RAP. Post-translationally, polyubiquitinated. Requires functional TRAF6 and may provoke SQSTM1-dependent degradation by the proteasome. In terms of processing, phosphorylation at various serine and threonine residues in S-P or T-P motifs by proline-directed protein kinases (PDPK1, CDK1, CDK5, GSK3, MAPK) (a few sites per protein in interphase, more in mitosis), and at serine residues in K-X-G-S motifs by MAP/microtubule affinity-regulating kinase (MARK1, MARK2, MARK3 or MARK4), causing detachment from microtubules, and their disassembly. Phosphorylation at Ser-597 by BRSK1 and BRSK2 in neurons affects ability to bind microtubules and plays a role in neuron polarization. Phosphorylated by PHK. Dephosphorylation at several serine and threonine residues by the serine/threonine phosphatase PPP5C. Phosphorylation at Ser-214 by SGK1 mediates microtubule depolymerization and neurite formation in hippocampal neurons.

It is found in the cytoplasm. Its subcellular location is the cytosol. The protein resides in the cell membrane. It localises to the cytoskeleton. The protein localises to the cell projection. It is found in the axon. Its subcellular location is the dendrite. Its function is as follows. Promotes microtubule assembly and stability, and might be involved in the establishment and maintenance of neuronal polarity. The C-terminus binds axonal microtubules while the N-terminus binds neural plasma membrane components, suggesting that tau functions as a linker protein between both. Axonal polarity is predetermined by tau localization (in the neuronal cell) in the domain of the cell body defined by the centrosome. The short isoforms allow plasticity of the cytoskeleton whereas the longer isoforms may preferentially play a role in its stabilization. The sequence is that of Microtubule-associated protein tau (MAPT) from Pan troglodytes (Chimpanzee).